The primary structure comprises 39 residues: Photosystem II reaction center protein L (39 aa).

Residues 18–38 (SLYLGLLFVFVTGVLMSSYFF) form a helical membrane-spanning segment.

Belongs to the PsbL family. In terms of assembly, PSII is composed of 1 copy each of membrane proteins PsbA, PsbB, PsbC, PsbD, PsbE, PsbF, PsbH, PsbI, PsbJ, PsbK, PsbL, PsbM, PsbT, PsbX, PsbY, PsbZ, Psb30/Ycf12, peripheral proteins PsbO, CyanoQ (PsbQ), PsbU, PsbV and a large number of cofactors. It forms dimeric complexes.

The protein localises to the cellular thylakoid membrane. Its function is as follows. One of the components of the core complex of photosystem II (PSII). PSII is a light-driven water:plastoquinone oxidoreductase that uses light energy to abstract electrons from H(2)O, generating O(2) and a proton gradient subsequently used for ATP formation. It consists of a core antenna complex that captures photons, and an electron transfer chain that converts photonic excitation into a charge separation. This subunit is found at the monomer-monomer interface and is required for correct PSII assembly and/or dimerization. The polypeptide is Photosystem II reaction center protein L (Parasynechococcus marenigrum (strain WH8102)).